A 405-amino-acid chain; its full sequence is Nicotinate phosphoribosyltransferase (405 aa).

Phosphohistidine; by autocatalysis is present on His230.

This sequence belongs to the NAPRTase family. In terms of processing, transiently phosphorylated on a His residue during the reaction cycle. Phosphorylation strongly increases the affinity for substrates and increases the rate of nicotinate D-ribonucleotide production. Dephosphorylation regenerates the low-affinity form of the enzyme, leading to product release.

It carries out the reaction nicotinate + 5-phospho-alpha-D-ribose 1-diphosphate + ATP + H2O = nicotinate beta-D-ribonucleotide + ADP + phosphate + diphosphate. It functions in the pathway cofactor biosynthesis; NAD(+) biosynthesis; nicotinate D-ribonucleotide from nicotinate: step 1/1. Catalyzes the synthesis of beta-nicotinate D-ribonucleotide from nicotinate and 5-phospho-D-ribose 1-phosphate at the expense of ATP. In Bordetella bronchiseptica (strain ATCC BAA-588 / NCTC 13252 / RB50) (Alcaligenes bronchisepticus), this protein is Nicotinate phosphoribosyltransferase.